A 236-amino-acid chain; its full sequence is Phosphoribosylaminoimidazole-succinocarboxamide synthase (236 aa).

This sequence belongs to the SAICAR synthetase family.

The catalysed reaction is 5-amino-1-(5-phospho-D-ribosyl)imidazole-4-carboxylate + L-aspartate + ATP = (2S)-2-[5-amino-1-(5-phospho-beta-D-ribosyl)imidazole-4-carboxamido]succinate + ADP + phosphate + 2 H(+). It participates in purine metabolism; IMP biosynthesis via de novo pathway; 5-amino-1-(5-phospho-D-ribosyl)imidazole-4-carboxamide from 5-amino-1-(5-phospho-D-ribosyl)imidazole-4-carboxylate: step 1/2. This is Phosphoribosylaminoimidazole-succinocarboxamide synthase from Cellvibrio japonicus (strain Ueda107) (Pseudomonas fluorescens subsp. cellulosa).